A 432-amino-acid polypeptide reads, in one-letter code: Glutamyl-tRNA reductase (432 aa).

Residues 55–58 (TCNR), S114, 119–121 (ETQ), and Q125 contribute to the substrate site. The active-site Nucleophile is the C56. 194–199 (GAGEMI) is a binding site for NADP(+).

This sequence belongs to the glutamyl-tRNA reductase family. Homodimer.

The catalysed reaction is (S)-4-amino-5-oxopentanoate + tRNA(Glu) + NADP(+) = L-glutamyl-tRNA(Glu) + NADPH + H(+). It functions in the pathway porphyrin-containing compound metabolism; protoporphyrin-IX biosynthesis; 5-aminolevulinate from L-glutamyl-tRNA(Glu): step 1/2. Catalyzes the NADPH-dependent reduction of glutamyl-tRNA(Glu) to glutamate 1-semialdehyde (GSA). The polypeptide is Glutamyl-tRNA reductase (Burkholderia pseudomallei (strain 1710b)).